A 524-amino-acid chain; its full sequence is Bifunctional purine biosynthesis protein PurH (524 aa).

Positions 1–144 (MTRRALVSVS…KNSAHVGVVV (144 aa)) constitute an MGS-like domain.

This sequence belongs to the PurH family.

The enzyme catalyses (6R)-10-formyltetrahydrofolate + 5-amino-1-(5-phospho-beta-D-ribosyl)imidazole-4-carboxamide = 5-formamido-1-(5-phospho-D-ribosyl)imidazole-4-carboxamide + (6S)-5,6,7,8-tetrahydrofolate. It catalyses the reaction IMP + H2O = 5-formamido-1-(5-phospho-D-ribosyl)imidazole-4-carboxamide. The protein operates within purine metabolism; IMP biosynthesis via de novo pathway; 5-formamido-1-(5-phospho-D-ribosyl)imidazole-4-carboxamide from 5-amino-1-(5-phospho-D-ribosyl)imidazole-4-carboxamide (10-formyl THF route): step 1/1. It participates in purine metabolism; IMP biosynthesis via de novo pathway; IMP from 5-formamido-1-(5-phospho-D-ribosyl)imidazole-4-carboxamide: step 1/1. This Anaeromyxobacter sp. (strain K) protein is Bifunctional purine biosynthesis protein PurH.